Reading from the N-terminus, the 241-residue chain is Queuine tRNA-ribosyltransferase-like protein (241 aa).

It belongs to the queuine tRNA-ribosyltransferase family.

The protein is Queuine tRNA-ribosyltransferase-like protein of Plasmodium falciparum.